The chain runs to 322 residues: Acetyl-coenzyme A carboxylase carboxyl transferase subunit alpha (322 aa).

The CoA carboxyltransferase C-terminal domain occupies 39–296 (DLTALKKQLI…HSKLVTELNY (258 aa)).

It belongs to the AccA family. In terms of assembly, acetyl-CoA carboxylase is a heterohexamer composed of biotin carboxyl carrier protein (accB), biotin carboxylase (accC) and two subunits each of ACCase subunit alpha (accA) and ACCase subunit beta (accD).

The protein resides in the plastid. It localises to the chloroplast. The enzyme catalyses N(6)-carboxybiotinyl-L-lysyl-[protein] + acetyl-CoA = N(6)-biotinyl-L-lysyl-[protein] + malonyl-CoA. It participates in lipid metabolism; malonyl-CoA biosynthesis; malonyl-CoA from acetyl-CoA: step 1/1. Its function is as follows. Component of the acetyl coenzyme A carboxylase (ACC) complex. First, biotin carboxylase catalyzes the carboxylation of biotin on its carrier protein (BCCP) and then the CO(2) group is transferred by the carboxyltransferase to acetyl-CoA to form malonyl-CoA. The protein is Acetyl-coenzyme A carboxylase carboxyl transferase subunit alpha of Antithamnion sp. (Red alga).